Reading from the N-terminus, the 209-residue chain is Orotate phosphoribosyltransferase (209 aa).

Residues Arg96, Lys100, His102, and 122–130 contribute to the 5-phospho-alpha-D-ribose 1-diphosphate site; that span reads EDLISTGGS. Position 126 (Ser126) interacts with orotate.

This sequence belongs to the purine/pyrimidine phosphoribosyltransferase family. PyrE subfamily. As to quaternary structure, homodimer. It depends on Mg(2+) as a cofactor.

It catalyses the reaction orotidine 5'-phosphate + diphosphate = orotate + 5-phospho-alpha-D-ribose 1-diphosphate. Its pathway is pyrimidine metabolism; UMP biosynthesis via de novo pathway; UMP from orotate: step 1/2. Its function is as follows. Catalyzes the transfer of a ribosyl phosphate group from 5-phosphoribose 1-diphosphate to orotate, leading to the formation of orotidine monophosphate (OMP). This Streptococcus sanguinis (strain SK36) protein is Orotate phosphoribosyltransferase.